A 478-amino-acid chain; its full sequence is Sugar transporter ERD6-like 18 (478 aa).

A run of 12 helical transmembrane segments spans residues 31–51 (ITACVILSTFIAVCGSFSFGV), 71–91 (IAQFSAFASLSTLGAAIGALF), 110–130 (LLCIIGWFSIAFAKDVMWLNF), 133–153 (ISSGIGLGLISYVVPVYIAEI), 162–180 (FTFTNQLLQNSGLAMVYFS), 188–208 (ILALLGALPCFIQVIGLFFVP), 270–290 (TLVVGIGLMLIQQFSGSSAVL), 306–326 (IGSTLLGLFMIPKAMIGVILV), 333–353 (PLLLTSVSGMCITSMLIGVAF), 367–387 (VFTFICVTLYIGTYAIGLGGL), 407–427 (IVTLVSWSSSSIVTYAFNFLL), and 433–453 (GTFYVFGAVGGLALLFIWLLV).

This sequence belongs to the major facilitator superfamily. Sugar transporter (TC 2.A.1.1) family. In terms of tissue distribution, expressed in leaf vasculature, stem and flowers.

The protein localises to the membrane. In terms of biological role, sugar transporter. The chain is Sugar transporter ERD6-like 18 (SFP2) from Arabidopsis thaliana (Mouse-ear cress).